A 454-amino-acid chain; its full sequence is tRNA modification GTPase MnmE (454 aa).

Positions 23, 80, and 120 each coordinate (6S)-5-formyl-5,6,7,8-tetrahydrofolate. In terms of domain architecture, TrmE-type G spans 216 to 377 (GMKVVIAGRP…LRDHLKQSMG (162 aa)). Asn-226 contributes to the K(+) binding site. GTP is bound by residues 226 to 231 (NAGKSS), 245 to 251 (TDIAGTT), 270 to 273 (DTAG), 335 to 338 (NKAD), and 358 to 360 (SAR). Ser-230 contacts Mg(2+). K(+) contacts are provided by Thr-245, Ile-247, and Thr-250. Residue Thr-251 coordinates Mg(2+). Lys-454 is a (6S)-5-formyl-5,6,7,8-tetrahydrofolate binding site.

Belongs to the TRAFAC class TrmE-Era-EngA-EngB-Septin-like GTPase superfamily. TrmE GTPase family. In terms of assembly, homodimer. Heterotetramer of two MnmE and two MnmG subunits. Requires K(+) as cofactor.

It localises to the cytoplasm. Its function is as follows. Exhibits a very high intrinsic GTPase hydrolysis rate. Involved in the addition of a carboxymethylaminomethyl (cmnm) group at the wobble position (U34) of certain tRNAs, forming tRNA-cmnm(5)s(2)U34. This is tRNA modification GTPase MnmE from Yersinia pseudotuberculosis serotype O:1b (strain IP 31758).